We begin with the raw amino-acid sequence, 446 residues long: Protein IQ-DOMAIN 19 (446 aa).

The tract at residues 93 to 140 (IPGTPKEKRRWSFRRSSATGPPPPACAITLKDSPPPPPPPPPPPPLQQ) is disordered. Over residues 125–139 (SPPPPPPPPPPPPLQ) the composition is skewed to pro residues. IQ domains follow at residues 163–191 (EEFAAIKIQACYRSHLARKALRALKGLVK) and 192–214 (LQALVRGHLVRKQATATLRCMQA). Residues 214–231 (ALITLQAKAREQRIRMIG) are calmodulin-binding. Positions 332 to 345 (QSSKAKARSQSAPK) are enriched in low complexity. Residues 332–398 (QSSKAKARSQ…TAKESQQHHH (67 aa)) are disordered. Residues 379-392 (QRSSSQLGSNTAKE) show a composition bias toward polar residues.

Belongs to the IQD family. As to quaternary structure, binds to multiple calmodulin (CaM) in the presence of Ca(2+) and CaM-like proteins.

The protein localises to the cytoplasm. It localises to the cytoskeleton. It is found in the cell membrane. Its function is as follows. May be involved in cooperative interactions with calmodulins or calmodulin-like proteins. Recruits calmodulin proteins to microtubules, thus being a potential scaffold in cellular signaling and trafficking. Acts as a positive regulator of trichome branch initiation. May associate with nucleic acids and regulate gene expression at the transcriptional or post-transcriptional level. This chain is Protein IQ-DOMAIN 19, found in Arabidopsis thaliana (Mouse-ear cress).